The primary structure comprises 554 residues: Formate--tetrahydrofolate ligase (554 aa).

ATP is bound at residue 65–72 (TPLGEGKT).

It belongs to the formate--tetrahydrofolate ligase family.

It catalyses the reaction (6S)-5,6,7,8-tetrahydrofolate + formate + ATP = (6R)-10-formyltetrahydrofolate + ADP + phosphate. It participates in one-carbon metabolism; tetrahydrofolate interconversion. The chain is Formate--tetrahydrofolate ligase from Aliivibrio salmonicida (strain LFI1238) (Vibrio salmonicida (strain LFI1238)).